A 1679-amino-acid polypeptide reads, in one-letter code: Furin-like protease 2 (1679 aa).

Positions 1-10 (MSNTTRSSRV) are enriched in polar residues. The segment at 1–42 (MSNTTRSSRVTIGRIGTTPQITDPWSSGLEKQRPSRCGGPKS) is disordered. 3 N-linked (GlcNAc...) asparagine glycosylation sites follow: N3, N109, and N130. The disordered stretch occupies residues 139–164 (VSSLHSSRRTNPPSSSSSSSSNVDVD). A compositionally biased stretch (low complexity) spans 147–160 (RTNPPSSSSSSSSN). An N-linked (GlcNAc...) asparagine glycan is attached at N205. One can recognise a Peptidase S8 domain in the interval 383–705 (QWYLNGGAKD…YGLMDAGAMV (323 aa)). Residue D417 is the Charge relay system of the active site. Residues 424–456 (HPDLAQNYDPEASFDINGNDSDPTPQDNGDNKH) are disordered. The segment covering 439 to 451 (INGNDSDPTPQDN) has biased composition (polar residues). An N-linked (GlcNAc...) asparagine glycan is attached at N442. Catalysis depends on H456, which acts as the Charge relay system. 2 disulfides stabilise this stretch: C473–C629 and C565–C595. N480 carries an N-linked (GlcNAc...) asparagine glycan. S637 functions as the Charge relay system in the catalytic mechanism. Residues 714–852 (VPPQHICKSR…QLIFYGTSTQ (139 aa)) enclose the P/Homo B domain. A disulfide bridge connects residues C720 and C748. Residue N927 is glycosylated (N-linked (GlcNAc...) asparagine). 10 FU repeats span residues 961-1006 (KKIL…RSFP), 1009-1056 (VGIC…GYFE), 1060-1104 (NRTC…DTYE), 1107-1152 (DNKC…GFYA), 1156-1204 (RLEC…SEFY), 1208-1253 (EGQC…GFFV), 1256-1299 (GSLC…GYYS), 1301-1346 (RGIC…GFYK), 1348-1393 (DFGC…QYYD), and 1396-1443 (SATC…QTLA). N-linked (GlcNAc...) asparagine glycosylation occurs at N1060. Residue N1181 is glycosylated (N-linked (GlcNAc...) asparagine). N1274 and N1277 each carry an N-linked (GlcNAc...) asparagine glycan. A glycan (N-linked (GlcNAc...) asparagine) is linked at N1439. A helical membrane pass occupies residues 1512–1532 (AIAVAICLLIITIFSIIFAVL). The Cytoplasmic portion of the chain corresponds to 1533–1679 (QRNSNHVSRN…STTSRTNIRS (147 aa)). Residues 1660-1679 (TNAERKNHPSSTTSRTNIRS) form a disordered region. Polar residues predominate over residues 1668–1679 (PSSTTSRTNIRS).

The protein belongs to the peptidase S8 family. Furin subfamily. Ca(2+) is required as a cofactor. As to expression, transient expression in a subset of central nervous system neurons during embryonic stages 12-13. Expression in developing tracheal tree from stage 13 to end of embryonic development.

It localises to the membrane. It carries out the reaction Release of mature proteins from their proproteins by cleavage of -Arg-Xaa-Yaa-Arg-|-Zaa- bonds, where Xaa can be any amino acid and Yaa is Arg or Lys. Releases albumin, complement component C3 and von Willebrand factor from their respective precursors.. Its function is as follows. Furin is likely to represent the ubiquitous endoprotease activity within constitutive secretory pathways and capable of cleavage at the RX(K/R)R consensus motif. This Drosophila melanogaster (Fruit fly) protein is Furin-like protease 2 (Fur2).